A 764-amino-acid chain; its full sequence is Subtilisin-like protease SBT1.6 (764 aa).

The first 20 residues, 1 to 20, serve as a signal peptide directing secretion; sequence MASSTIVLLLFLSFPFISFA. Residues 46 to 99 form the Inhibitor I9 domain; that stretch reads HWYSTEFAEESRIVHVYHTVFHGFSAVVTPDEADNLRNHPAVLAVFEDRRRELH. Positions 103-606 constitute a Peptidase S8 domain; that stretch reads SPQFLGLQNQ…SGHLNLGRAM (504 aa). Aspartate 131 acts as the Charge relay system in catalysis. Asparagine 191 carries N-linked (GlcNAc...) asparagine glycosylation. The active-site Charge relay system is the histidine 205. In terms of domain architecture, PA spans 377 to 457; the sequence is SSASLCMENT…NEGDRIKAYA (81 aa). Catalysis depends on serine 538, which acts as the Charge relay system. Asparagine 578 carries an N-linked (GlcNAc...) asparagine glycan.

The protein belongs to the peptidase S8 family. As to expression, expressed in roots, leaves and flowers of mature plants.

The sequence is that of Subtilisin-like protease SBT1.6 from Arabidopsis thaliana (Mouse-ear cress).